Here is a 707-residue protein sequence, read N- to C-terminus: Keratin, type II cytoskeletal 2 epidermal (707 aa).

The interval 1–20 (MSCQISCRSRRGGGGGGGGG) is disordered. The head stretch occupies residues 1–198 (MSCQISCRSR…DPEIQNVKSQ (198 aa)). Asymmetric dimethylarginine is present on R22. Residues S25 and S28 each carry the phosphoserine modification. Low complexity predominate over residues 29 to 38 (AVVSGGSRRS). A disordered region spans residues 29–59 (AVVSGGSRRSNTSFSCISRHGGGRGGSGGGG). An Omega-N-methylarginine modification is found at R52. S64 carries the phosphoserine modification. A coil 1A region spans residues 199-234 (EREQIKTLNNKFASFIDKVRFLEQQNQVLRTKWELL). Residues 199–512 (EREQIKTLNN…KLLEGEECRM (314 aa)) enclose the IF rod domain. The linker 1 stretch occupies residues 235–253 (QQLDVGSRTTNLDPIFQAY). The interval 254–345 (IGMLKKQVDR…TLYDAELSQL (92 aa)) is coil 1B. Residues 346 to 369 (QQDVTDTNVILSMDNNRNLDLDSI) are linker 12. The segment at 370-508 (IAEVQNQYEM…ATYRKLLEGE (139 aa)) is coil 2. Residues 509–707 (ECRMSGDFSD…CGSGVTFSFR (199 aa)) are tail. The interval 531 to 707 (SSVASKTGFG…CGSGVTFSFR (177 aa)) is disordered. Gly residues predominate over residues 539–700 (FGSGGQSSGG…GSGSGEGCGS (162 aa)). An omega-N-methylarginine mark is found at R555, R593, R607, and R675.

The protein belongs to the intermediate filament family. In terms of assembly, heterotetramer of two type I and two type II keratins. Associates with KRT10. In terms of tissue distribution, expressed predominantly in the suprabasal layers of the plantar epidermis outside of the footpads (at protein level). Expressed in the suprabasal layers of the interfollicular epidermis of the ear, in the interscale regions distant from the hair follicles in the tail, and in the soles of the footpads (at protein level). Expressed mainly in the middle spinous and granular cells of the epidermis of adult tail, nipple and footsole skin. Also found in ear.

It is found in the cytoplasm. In terms of biological role, probably contributes to terminal cornification. Associated with keratinocyte activation, proliferation and keratinization. Required for maintenance of corneocytes and keratin filaments in suprabasal keratinocytes in the epidermis of the ear, potentially via moderation of expression and localization of keratins and their partner proteins. Plays a role in the establishment of the epidermal barrier on plantar skin. The sequence is that of Keratin, type II cytoskeletal 2 epidermal from Mus musculus (Mouse).